Here is a 204-residue protein sequence, read N- to C-terminus: Large ribosomal subunit protein uL4 (204 aa).

A disordered region spans residues Val56–Ser79.

This sequence belongs to the universal ribosomal protein uL4 family. As to quaternary structure, part of the 50S ribosomal subunit.

In terms of biological role, one of the primary rRNA binding proteins, this protein initially binds near the 5'-end of the 23S rRNA. It is important during the early stages of 50S assembly. It makes multiple contacts with different domains of the 23S rRNA in the assembled 50S subunit and ribosome. Functionally, forms part of the polypeptide exit tunnel. The protein is Large ribosomal subunit protein uL4 of Wolbachia pipientis subsp. Culex pipiens (strain wPip).